Here is a 434-residue protein sequence, read N- to C-terminus: Arginine/serine-rich coiled-coil protein 2 (434 aa).

Basic and acidic residues predominate over residues 1-27 (MAASDTERDGLAPEKTSPDRDKKKEQS). The segment at 1–230 (MAASDTERDG…PSPPPFRGRN (230 aa)) is disordered. A2 carries the post-translational modification N-acetylalanine. Residue S4 is modified to Phosphoserine. Residues T6 and T16 each carry the phosphothreonine modification. Phosphoserine occurs at positions 17, 30, and 32. A compositionally biased stretch (basic residues) spans 35–51 (ASKHHYSRSRSRSRERK). Positions 66-111 (RSKEGRRHESKDKSSKKHKSEEHNDKEHSSDKGRERLNSSENGEDR) are enriched in basic and acidic residues. S104 bears the Phosphoserine mark. Over residues 112–214 (HKRKERKSSR…KRIEKPRRFS (103 aa)) the composition is skewed to basic residues. Residues 230–270 (NTAMDAQEALARRLERAKKLQEQREKEMVEKQKQQEIAAAA) are a coiled coil. A Glycyl lysine isopeptide (Lys-Gly) (interchain with G-Cter in SUMO1); alternate cross-link involves residue K375. K375 is covalently cross-linked (Glycyl lysine isopeptide (Lys-Gly) (interchain with G-Cter in SUMO2); alternate). S376 is subject to Phosphoserine.

The protein belongs to the RSRC2 family.

The chain is Arginine/serine-rich coiled-coil protein 2 (RSRC2) from Homo sapiens (Human).